Reading from the N-terminus, the 227-residue chain is Phosphoglycolate phosphatase (227 aa).

Catalysis depends on Asp-13, which acts as the Nucleophile. Mg(2+) contacts are provided by Asp-13, Asp-15, and Asp-176.

The protein belongs to the HAD-like hydrolase superfamily. CbbY/CbbZ/Gph/YieH family. The cofactor is Mg(2+).

It carries out the reaction 2-phosphoglycolate + H2O = glycolate + phosphate. It participates in organic acid metabolism; glycolate biosynthesis; glycolate from 2-phosphoglycolate: step 1/1. Its function is as follows. Specifically catalyzes the dephosphorylation of 2-phosphoglycolate. Is involved in the dissimilation of the intracellular 2-phosphoglycolate formed during the DNA repair of 3'-phosphoglycolate ends, a major class of DNA lesions induced by oxidative stress. The chain is Phosphoglycolate phosphatase from Nitrosospira multiformis (strain ATCC 25196 / NCIMB 11849 / C 71).